We begin with the raw amino-acid sequence, 177 residues long: Adenine phosphoribosyltransferase (177 aa).

Belongs to the purine/pyrimidine phosphoribosyltransferase family. In terms of assembly, homodimer.

The protein localises to the cytoplasm. It catalyses the reaction AMP + diphosphate = 5-phospho-alpha-D-ribose 1-diphosphate + adenine. Its pathway is purine metabolism; AMP biosynthesis via salvage pathway; AMP from adenine: step 1/1. Its function is as follows. Catalyzes a salvage reaction resulting in the formation of AMP, that is energically less costly than de novo synthesis. This Chlorobaculum tepidum (strain ATCC 49652 / DSM 12025 / NBRC 103806 / TLS) (Chlorobium tepidum) protein is Adenine phosphoribosyltransferase.